The primary structure comprises 53 residues: UPF0391 membrane protein BPSS2216 (53 aa).

The next 2 helical transmembrane spans lie at 5–25 (ALVF…GIAA) and 30–50 (IAKI…VLGV).

The protein belongs to the UPF0391 family.

It is found in the cell membrane. The sequence is that of UPF0391 membrane protein BPSS2216 from Burkholderia pseudomallei (strain K96243).